Here is a 174-residue protein sequence, read N- to C-terminus: Co-chaperone protein HscB homolog (174 aa).

A J domain is found at 2–74 (NYFELFKFSP…IRRAEHMLSL (73 aa)).

This sequence belongs to the HscB family. In terms of assembly, interacts with HscA and stimulates its ATPase activity.

Functionally, co-chaperone involved in the maturation of iron-sulfur cluster-containing proteins. Seems to help targeting proteins to be folded toward HscA. The protein is Co-chaperone protein HscB homolog of Shewanella sp. (strain ANA-3).